The sequence spans 547 residues: Probable ABC transporter periplasmic-binding protein SapA (547 aa).

The first 21 residues, 1 to 21 (MRQVLSSLLVIAGLVSGQAIA), serve as a signal peptide directing secretion.

This sequence belongs to the bacterial solute-binding protein 5 family.

Its subcellular location is the periplasm. In terms of biological role, not part of a putrescine export system. Very similar to a S.typhimurium protein implicated in antimicrobial peptide resistance, but the SapBCDF operon in E.coli is implicated in putrescine export. This chain is Probable ABC transporter periplasmic-binding protein SapA (sapA), found in Escherichia coli (strain K12).